A 462-amino-acid polypeptide reads, in one-letter code: Syringate O-demethylase (462 aa).

Belongs to the GcvT family.

It carries out the reaction syringate + (6S)-5,6,7,8-tetrahydrofolate = 3-O-methylgallate + (6S)-5-methyl-5,6,7,8-tetrahydrofolate. It participates in secondary metabolite metabolism; lignin degradation. In terms of biological role, involved in the catabolism of syringate. Catalyzes the conversion of syringate to 3-O-methylgallate (3MGA) in the presence of tetrahydrofolate. Has weak activity with vanillate and 3-O-methylgallate. This chain is Syringate O-demethylase, found in Sphingobium sp. (strain NBRC 103272 / SYK-6).